A 468-amino-acid polypeptide reads, in one-letter code: tRNA threonylcarbamoyladenosine dehydratase (468 aa).

3 helical membrane passes run Phe-15 to Phe-35, Asn-109 to Ala-129, and Ile-315 to Leu-335.

Belongs to the HesA/MoeB/ThiF family.

The protein resides in the mitochondrion outer membrane. Catalyzes the ATP-dependent dehydration of threonylcarbamoyladenosine at position 37 (t(6)A37) to form cyclic t(6)A37 (ct(6)A37) in tRNAs that read codons beginning with adenine. This Schizosaccharomyces pombe (strain 972 / ATCC 24843) (Fission yeast) protein is tRNA threonylcarbamoyladenosine dehydratase (tcd1).